The sequence spans 104 residues: Integration host factor subunit beta (104 aa).

It belongs to the bacterial histone-like protein family. As to quaternary structure, heterodimer of an alpha and a beta chain.

Functionally, this protein is one of the two subunits of integration host factor, a specific DNA-binding protein that functions in genetic recombination as well as in transcriptional and translational control. The polypeptide is Integration host factor subunit beta (ihfB) (Neisseria gonorrhoeae).